Here is a 692-residue protein sequence, read N- to C-terminus: DNA ligase (692 aa).

NAD(+)-binding positions include 35–39 (DLVYD), 88–89 (SL), and Glu117. Residue Lys119 is the N6-AMP-lysine intermediate of the active site. 4 residues coordinate NAD(+): Arg140, Glu176, Lys301, and Lys325. Residues Cys416, Cys419, Cys434, and Cys439 each contribute to the Zn(2+) site. Residues 611–692 (LTNQSNSWAS…FDLIKNSKKT (82 aa)) form the BRCT domain.

It belongs to the NAD-dependent DNA ligase family. LigA subfamily. Requires Mg(2+) as cofactor. It depends on Mn(2+) as a cofactor.

The enzyme catalyses NAD(+) + (deoxyribonucleotide)n-3'-hydroxyl + 5'-phospho-(deoxyribonucleotide)m = (deoxyribonucleotide)n+m + AMP + beta-nicotinamide D-nucleotide.. DNA ligase that catalyzes the formation of phosphodiester linkages between 5'-phosphoryl and 3'-hydroxyl groups in double-stranded DNA using NAD as a coenzyme and as the energy source for the reaction. It is essential for DNA replication and repair of damaged DNA. This is DNA ligase from Mesomycoplasma hyopneumoniae (strain 232) (Mycoplasma hyopneumoniae).